The sequence spans 1020 residues: Vacuolar membrane protease (1020 aa).

The Cytoplasmic portion of the chain corresponds to 1–11 (MKCHNPFGFRV). Residues 12 to 32 (GPVTFWTIIIYLALLVPLLWI) form a helical membrane-spanning segment. At 33–410 (HETVPPAPSS…GFAVFGLRGL (378 aa)) the chain is on the vacuolar side. N-linked (GlcNAc...) asparagine glycosylation is found at Asn50, Asn94, and Asn130. His191 and Asp203 together coordinate Zn(2+). Glu237 acts as the Proton acceptor in catalysis. 3 residues coordinate Zn(2+): Glu238, Glu263, and His336. Residues 411–431 (FAWSLTLLIVSPLILAILVFI) traverse the membrane as a helical segment. Topologically, residues 432-467 (LNRHDKLYFFSRKINVHNEGSEDPVSIGGFRGFTRF) are cytoplasmic. A helical transmembrane segment spans residues 468-488 (PIAVGFSGALTLASAFLLTKI). The Vacuolar portion of the chain corresponds to 489-491 (NPM). A helical transmembrane segment spans residues 492-512 (IVYSSEYAVWGMMLSLFYVSL). The Cytoplasmic segment spans residues 513-529 (WMTLKGSSAVRPSALQR). The chain crosses the membrane as a helical span at residues 530 to 550 (GYIHIWLFIVSWGLLIVVAVT). The Vacuolar segment spans residues 551 to 561 (EDRLKIASGYP). A helical membrane pass occupies residues 562 to 582 (VVFLHSALFLSTVISFLELFG). Residues 583–690 (LTKKHDYARR…RLPGWTWILQ (108 aa)) lie on the Cytoplasmic side of the membrane. The disordered stretch occupies residues 609 to 648 (DDALIAPDTPNDEAEDSDGEDSEHEPTETTPLRAGGDSRV). Positions 618–631 (PNDEAEDSDGEDSE) are enriched in acidic residues. The helical transmembrane segment at 691–711 (FLLLAPINVILWGQIGLFAVA) threads the bilayer. Topologically, residues 712–724 (ATQAGGADGGSVL) are vacuolar. The chain crosses the membrane as a helical span at residues 725 to 745 (TTYLIIAVLSIVILVPLAPFI). At 746–750 (HRVHY) the chain is on the cytoplasmic side. Residues 751-771 (YVPIILFAAFAGTLIYNLIAF) traverse the membrane as a helical segment. Residues 772–1020 (PFSANNRYKI…VGLVRPVKRF (249 aa)) lie on the Vacuolar side of the membrane. 3 N-linked (GlcNAc...) asparagine glycosylation sites follow: Asn851, Asn868, and Asn873.

The protein belongs to the peptidase M28 family. Requires Zn(2+) as cofactor.

Its subcellular location is the vacuole membrane. May be involved in vacuolar sorting and osmoregulation. In Verticillium alfalfae (strain VaMs.102 / ATCC MYA-4576 / FGSC 10136) (Verticillium wilt of alfalfa), this protein is Vacuolar membrane protease.